The following is an 89-amino-acid chain: MTEAKKSLKRTLVGKVVSDKREKTVTVLVERRVKHPIYDKIVIKSSKYHAHDENSEYKLGDTIEITESRPLSKTKNWVATRLVQKAALV.

Belongs to the universal ribosomal protein uS17 family. As to quaternary structure, part of the 30S ribosomal subunit.

One of the primary rRNA binding proteins, it binds specifically to the 5'-end of 16S ribosomal RNA. The chain is Small ribosomal subunit protein uS17 from Paracidovorax citrulli (strain AAC00-1) (Acidovorax citrulli).